Here is a 373-residue protein sequence, read N- to C-terminus: Putative C-P lyase subunit protein HtxH (373 aa).

Belongs to the PhnI family.

Functionally, belongs to an operon involved in hypophosphite oxidation. Exact function not known. The chain is Putative C-P lyase subunit protein HtxH (htxH) from Stutzerimonas stutzeri (Pseudomonas stutzeri).